A 210-amino-acid polypeptide reads, in one-letter code: UPF0173 protein PYRAB01190 (210 aa).

This sequence belongs to the UPF0173 family.

This chain is UPF0173 protein PYRAB01190, found in Pyrococcus abyssi (strain GE5 / Orsay).